The chain runs to 150 residues: Macrodomain Ter protein (150 aa).

The protein belongs to the MatP family. Homodimer.

It is found in the cytoplasm. Required for spatial organization of the terminus region of the chromosome (Ter macrodomain) during the cell cycle. Prevents early segregation of duplicated Ter macrodomains during cell division. Binds specifically to matS, which is a 13 bp signature motif repeated within the Ter macrodomain. The protein is Macrodomain Ter protein of Klebsiella pneumoniae (strain 342).